A 278-amino-acid polypeptide reads, in one-letter code: Shikimate dehydrogenase (NADP(+)) (278 aa).

Shikimate contacts are provided by residues 19–21 and Thr-66; that span reads SRS. Lys-70 acts as the Proton acceptor in catalysis. Residues Asn-91 and Asp-106 each contribute to the shikimate site. NADP(+) contacts are provided by residues 129 to 133 and Phe-221; that span reads GAGGA. Tyr-223 contacts shikimate. NADP(+) is bound at residue Gly-242.

Belongs to the shikimate dehydrogenase family. Homodimer.

It carries out the reaction shikimate + NADP(+) = 3-dehydroshikimate + NADPH + H(+). It functions in the pathway metabolic intermediate biosynthesis; chorismate biosynthesis; chorismate from D-erythrose 4-phosphate and phosphoenolpyruvate: step 4/7. Functionally, involved in the biosynthesis of the chorismate, which leads to the biosynthesis of aromatic amino acids. Catalyzes the reversible NADPH linked reduction of 3-dehydroshikimate (DHSA) to yield shikimate (SA). This Anaeromyxobacter dehalogenans (strain 2CP-1 / ATCC BAA-258) protein is Shikimate dehydrogenase (NADP(+)).